A 357-amino-acid polypeptide reads, in one-letter code: DNA integrity scanning protein DisA (357 aa).

A DAC domain is found at 9-147; the sequence is DRKLLEILKT…DDIKYILRDS (139 aa). Residues glycine 76, leucine 94, and 107–111 each bind ATP; that span reads TRHRT.

The protein belongs to the DisA family. Homooctamer. Mg(2+) is required as a cofactor.

The catalysed reaction is 2 ATP = 3',3'-c-di-AMP + 2 diphosphate. Participates in a DNA-damage check-point that is active prior to asymmetric division when DNA is damaged. DisA forms globular foci that rapidly scan along the chromosomes during sporulation, searching for lesions. When a lesion is present, DisA pauses at the lesion site. This triggers a cellular response that culminates in a temporary block in sporulation initiation. In terms of biological role, also has diadenylate cyclase activity, catalyzing the condensation of 2 ATP molecules into cyclic di-AMP (c-di-AMP). c-di-AMP acts as a signaling molecule that couples DNA integrity with progression of sporulation. The rise in c-di-AMP level generated by DisA while scanning the chromosome, operates as a positive signal that advances sporulation; upon encountering a lesion, the DisA focus arrests at the damaged site and halts c-di-AMP synthesis. The sequence is that of DNA integrity scanning protein DisA from Clostridium acetobutylicum (strain ATCC 824 / DSM 792 / JCM 1419 / IAM 19013 / LMG 5710 / NBRC 13948 / NRRL B-527 / VKM B-1787 / 2291 / W).